The following is a 53-amino-acid chain: Putative defensin-like protein 53 (53 aa).

4 disulfide bridges follow: cysteine 12-cysteine 51, cysteine 16-cysteine 40, cysteine 26-cysteine 49, and cysteine 30-cysteine 50.

Belongs to the DEFL family.

This is Putative defensin-like protein 53 from Arabidopsis thaliana (Mouse-ear cress).